Reading from the N-terminus, the 359-residue chain is Protein Wnt-2 (359 aa).

A signal peptide spans 1 to 25; sequence MNAPLAGIWPWLPLLWAWLVPEVSS. Disulfide bonds link cysteine 75–cysteine 86, cysteine 126–cysteine 134, cysteine 136–cysteine 156, cysteine 205–cysteine 219, cysteine 207–cysteine 214, cysteine 277–cysteine 308, cysteine 293–cysteine 303, cysteine 307–cysteine 347, cysteine 323–cysteine 338, cysteine 325–cysteine 335, and cysteine 330–cysteine 331. A lipid anchor (O-palmitoleoyl serine; by PORCN) is attached at serine 211. Asparagine 294 is a glycosylation site (N-linked (GlcNAc...) asparagine).

The protein belongs to the Wnt family. Palmitoleoylation is required for efficient binding to frizzled receptors. Depalmitoleoylation leads to Wnt signaling pathway inhibition.

Its subcellular location is the secreted. The protein resides in the extracellular space. It is found in the extracellular matrix. In terms of biological role, ligand for members of the frizzled family of seven transmembrane receptors. Probable developmental protein. May be a signaling molecule which affects the development of discrete regions of tissues. Is likely to signal over only few cell diameters. This Echinops telfairi (Lesser hedgehog tenrec) protein is Protein Wnt-2 (WNT2).